The sequence spans 768 residues: Dual specificity calcium/calmodulin-dependent 3',5'-cyclic nucleotide phosphodiesterase 1C (768 aa).

An N-acetylmethionine modification is found at Met-1. Residues 183–206 (EKPRFKSIVHAVQAGIFVERMYRR) form a calmodulin-binding region. The PDEase domain maps to 211–588 (VGLSYPPAVI…ERWRAKVPKE (378 aa)). His-288 (proton donor) is an active-site residue. Zn(2+) contacts are provided by His-292, His-328, Asp-329, and Asp-436. Mg(2+) is bound at residue Asp-329. 2 disordered regions span residues 513-557 (LIDE…INNS) and 584-719 (KVPK…PPLR). 2 stretches are compositionally biased toward polar residues: residues 516–536 (ETSQ…INSS) and 543–557 (VKSS…INNS). Residues 584 to 614 (KVPKEEKAKKEAEEKARLAAEEKQKEMEAKS) are compositionally biased toward basic and acidic residues. Positions 631–641 (ETKGQVNGTRT) are enriched in polar residues. Basic and acidic residues-rich tracts occupy residues 642-659 (SKGD…KAGE) and 665-692 (DLKD…DGTK). A compositionally biased stretch (low complexity) spans 698–712 (SPAPSTSSTSRLTLP).

The protein belongs to the cyclic nucleotide phosphodiesterase family. PDE1 subfamily. As to quaternary structure, homodimer. Zn(2+) serves as cofactor. It depends on Mg(2+) as a cofactor. Highly expressed in olfactory epithelium and at moderate levels, in cerebellum, as well as weakly in forebrain, testis, heart and lung. In the olfactory epithelium, expressed by sensory neurons, but not epithelial cells.

It localises to the lysosome. It carries out the reaction a nucleoside 3',5'-cyclic phosphate + H2O = a nucleoside 5'-phosphate + H(+). It catalyses the reaction 3',5'-cyclic GMP + H2O = GMP + H(+). The enzyme catalyses 3',5'-cyclic AMP + H2O = AMP + H(+). With respect to regulation, type I PDE are activated by the binding of calmodulin in the presence of Ca(2+). In terms of biological role, calmodulin-dependent cyclic nucleotide phosphodiesterase with a dual specificity for the second messengers cAMP and cGMP, which are key regulators of many important physiological processes. Has a high affinity for both cAMP and cGMP. Modulates the amplitude and duration of the cAMP signal in sensory cilia in response to odorant stimulation, hence contributing to the generation of action potentials. Regulates smooth muscle cell proliferation. Regulates the stability of growth factor receptors, including PDGFRB. This Rattus norvegicus (Rat) protein is Dual specificity calcium/calmodulin-dependent 3',5'-cyclic nucleotide phosphodiesterase 1C.